The primary structure comprises 873 residues: Zinc fingers and homeoboxes protein 1 (873 aa).

Positions 1–63 (MASRRKSTTP…ESVDSDNQQN (63 aa)) are disordered. Residues 18–30 (QDPDLELISDLEE) are compositionally biased toward acidic residues. At Thr-36 the chain carries Phosphothreonine. Residues Ser-45, Ser-47, and Ser-48 each carry the phosphoserine modification. 2 C2H2-type zinc fingers span residues 70–93 (YECKYCTFQTPDLNMFTFHVDSEH) and 102–125 (YVCVECNFLTKRYDALSEHNLKYH). Lys-159 is covalently cross-linked (Glycyl lysine isopeptide (Lys-Gly) (interchain with G-Cter in SUMO2)). A disordered region spans residues 198-247 (VHHNSAEGTSEEKENGVKASREENAENTSSSASESNTSTSTVNQVHPSPA). Ser-202 carries the phosphoserine modification. Positions 207 to 221 (SEEKENGVKASREEN) are enriched in basic and acidic residues. Residues 223-238 (ENTSSSASESNTSTST) are compositionally biased toward low complexity. Residues 272 to 432 (NSNLVPKVLI…QTNVQKSQVP (161 aa)) form a required for dimerization region. Residues 272 to 564 (NSNLVPKVLI…SQPKQSWNPF (293 aa)) are required for interaction with NFYA. The homeobox 1 DNA-binding region spans 284–346 (NSIPTYNAAL…LKHGVSWTPE (63 aa)). Residues 430 to 455 (QVPAAQPAAETKPATAAVPSSPSVRP) form a disordered region. Glycyl lysine isopeptide (Lys-Gly) (interchain with G-Cter in SUMO2) cross-links involve residues Lys-441 and Lys-485. A DNA-binding region (homeobox 2) is located at residues 464–526 (SFGIRAKKTK…YNQRNSKSNQ (63 aa)). Disordered stretches follow at residues 540 to 568 (IDSSDETPEPPAAAASQPKQSWNPFPDFA), 627 to 664 (DEKVEVDESNVGSSKEEPGENSPGDEAVAPKSAGTGKI), and 731 to 767 (SSSLNGLSSLRKRGRGRPKGRGRGRPRGRPRGGKRMN). Positions 551 to 560 (AAAASQPKQS) are enriched in low complexity. Positions 569 to 631 (PQKFKEKTAE…TKALKDEKVE (63 aa)) form a DNA-binding region, homeobox 3. Lys-629 participates in a covalent cross-link: Glycyl lysine isopeptide (Lys-Gly) (interchain with G-Cter in SUMO2). Ser-648 is modified (phosphoserine). A DNA-binding region (homeobox 4) is located at residues 660–722 (GTGKICKKTP…YAWKNGNLKW (63 aa)). The required for nuclear localization stretch occupies residues 734–768 (LNGLSSLRKRGRGRPKGRGRGRPRGRPRGGKRMNT). Positions 740–764 (LRKRGRGRPKGRGRGRPRGRPRGGK) are enriched in basic residues. At Ser-774 the chain carries Phosphoserine. The segment at residues 777–832 (KFKTGTAILKDYYLKHKFLNEQDLDELVNRSHMGYEQVREWFAERQRRSELGIELF) is a DNA-binding region (homeobox 5). The tract at residues 829–873 (IELFEENEEEDEVIDDQEEDEEETDDSDTWEPPRHVKRKLSKSDD) is disordered. Residues 831–857 (LFEENEEEDEVIDDQEEDEEETDDSDT) are compositionally biased toward acidic residues. The segment at 831–873 (LFEENEEEDEVIDDQEEDEEETDDSDTWEPPRHVKRKLSKSDD) is required for repressor activity. Positions 863 to 873 (HVKRKLSKSDD) are enriched in basic residues.

This sequence belongs to the ZHX family. As to quaternary structure, forms homodimers. Heterodimer (via HD1 domain) with ZHX2 (via HD1 domain). Also forms a heterodimer with ZHX3 which is a prerequisite for repressor activity. Interacts with ATF7IP and NFYA. Interacts (via homeobox domains) with DNMT3B (via PWWP domain). Ubiquitously expressed.

Its subcellular location is the nucleus. Functionally, acts as a transcriptional repressor. Increases DNMT3B-mediated repressive transcriptional activity when DNMT3B is tethered to DNA. May link molecule between DNMT3B and other co-repressor proteins. This Rattus norvegicus (Rat) protein is Zinc fingers and homeoboxes protein 1 (Zhx1).